Here is a 397-residue protein sequence, read N- to C-terminus: Ribosomal RNA large subunit methyltransferase I (397 aa).

In terms of domain architecture, PUA spans 2–80; it reads SAAIYLVKGR…QDINRAFFVK (79 aa).

The protein belongs to the methyltransferase superfamily. RlmI family.

It localises to the cytoplasm. The catalysed reaction is cytidine(1962) in 23S rRNA + S-adenosyl-L-methionine = 5-methylcytidine(1962) in 23S rRNA + S-adenosyl-L-homocysteine + H(+). In terms of biological role, specifically methylates the cytosine at position 1962 (m5C1962) of 23S rRNA. The protein is Ribosomal RNA large subunit methyltransferase I of Vibrio vulnificus (strain CMCP6).